The primary structure comprises 221 residues: Ras-related protein Rab-28 (221 aa).

An N-acetylserine modification is found at Ser-2. Position 8 is a phosphoserine (Ser-8). 9 residues coordinate GTP: Gly-21, Gly-24, Lys-25, Thr-26, Ser-27, Gly-38, Lys-39, Tyr-41, and Thr-44. Thr-26 is a Mg(2+) binding site. Residues 35-49 (ETFGKQYKQTIGLDF) are switch I. Mg(2+) contacts are provided by Thr-44 and Asp-68. The segment at 68–85 (DIGGQTIGGKMLDKYIYG) is switch II. Gly-71, Asn-129, Lys-130, Asp-132, Ala-160, and Lys-161 together coordinate GTP. Cys-218 is modified (cysteine methyl ester). Cys-218 is lipidated: S-farnesyl cysteine. A propeptide spans 219 to 221 (AVQ) (removed in mature form).

This sequence belongs to the small GTPase superfamily. Rab family. Interacts (prenylated form) with PDE6D; the interaction promotes RAB28 delivery to the photoreceptor outer segments. Interacts with KCNJ13; the interaction may facilitate cone outer segments phagocytosis. Interacts with RELA; the interaction contributes to RELA transport from cytoplasm to nucleus. It depends on Mg(2+) as a cofactor. Post-translationally, isoprenylated. As to expression, testis, brain, and to much lower levels heart, skeletal muscle and fat cells. Expressed in the retina.

Its subcellular location is the cell membrane. It localises to the cytoplasm. It is found in the cytoskeleton. The protein localises to the cilium basal body. The protein resides in the nucleus. The enzyme catalyses GTP + H2O = GDP + phosphate + H(+). Its activity is regulated as follows. Regulated by guanine nucleotide exchange factors (GEFs) which promote the exchange of bound GDP for free GTP. Regulated by GTPase activating proteins (GAPs) which increase the GTP hydrolysis activity. Inhibited by GDP dissociation inhibitors (GDIs). Functionally, the small GTPases Rab are key regulators of intracellular membrane trafficking, from the formation of transport vesicles to their fusion with membranes. Rabs cycle between an inactive GDP-bound form and an active GTP-bound form that is able to recruit to membranes different sets of downstream effectors directly responsible for vesicle formation, movement, tethering and fusion. RAB28 is required for shedding and phagocytosis of cone cell outer segments (OS) discs in the retina. Also participates in nuclear factor kappa-B p65/RELA nuclear transport in endothelial cells. The chain is Ras-related protein Rab-28 from Rattus norvegicus (Rat).